A 464-amino-acid chain; its full sequence is Argininosuccinate lyase (464 aa).

The protein belongs to the lyase 1 family. Argininosuccinate lyase subfamily.

The protein resides in the cytoplasm. The enzyme catalyses 2-(N(omega)-L-arginino)succinate = fumarate + L-arginine. Its pathway is amino-acid biosynthesis; L-arginine biosynthesis; L-arginine from L-ornithine and carbamoyl phosphate: step 3/3. The protein is Argininosuccinate lyase of Frankia casuarinae (strain DSM 45818 / CECT 9043 / HFP020203 / CcI3).